Here is a 405-residue protein sequence, read N- to C-terminus: Phosphoglycerate kinase (405 aa).

Residues 23–25, R39, 62–65, R121, and R154 each bind substrate; these read DFN and HLGR. Residues K207, G298, E329, and 355–358 each bind ATP; that span reads GGDT.

Belongs to the phosphoglycerate kinase family. In terms of assembly, monomer.

It localises to the cytoplasm. The catalysed reaction is (2R)-3-phosphoglycerate + ATP = (2R)-3-phospho-glyceroyl phosphate + ADP. Its pathway is carbohydrate degradation; glycolysis; pyruvate from D-glyceraldehyde 3-phosphate: step 2/5. The polypeptide is Phosphoglycerate kinase (Campylobacter hominis (strain ATCC BAA-381 / DSM 21671 / CCUG 45161 / LMG 19568 / NCTC 13146 / CH001A)).